A 239-amino-acid chain; its full sequence is Sugar fermentation stimulation protein homolog (239 aa).

It belongs to the SfsA family.

This chain is Sugar fermentation stimulation protein homolog, found in Mannheimia succiniciproducens (strain KCTC 0769BP / MBEL55E).